We begin with the raw amino-acid sequence, 229 residues long: Small ribosomal subunit protein uS3 (229 aa).

In terms of domain architecture, KH type-2 spans 17–85 (VKEWIKDEVR…NPQVSVDEVE (69 aa)). The disordered stretch occupies residues 202–229 (LRGESGEDEGDKGDEQGGEAQEAEGAGA). Residues 219–229 (GEAQEAEGAGA) are compositionally biased toward low complexity.

Belongs to the universal ribosomal protein uS3 family. As to quaternary structure, part of the 30S ribosomal subunit.

In terms of biological role, binds the lower part of the 30S subunit head. This is Small ribosomal subunit protein uS3 from Archaeoglobus fulgidus (strain ATCC 49558 / DSM 4304 / JCM 9628 / NBRC 100126 / VC-16).